Here is a 156-residue protein sequence, read N- to C-terminus: Small ribosomal subunit protein uS7 (156 aa).

The protein belongs to the universal ribosomal protein uS7 family. In terms of assembly, part of the 30S ribosomal subunit. Contacts proteins S9 and S11.

Functionally, one of the primary rRNA binding proteins, it binds directly to 16S rRNA where it nucleates assembly of the head domain of the 30S subunit. Is located at the subunit interface close to the decoding center, probably blocks exit of the E-site tRNA. In Paracoccus denitrificans (strain Pd 1222), this protein is Small ribosomal subunit protein uS7.